The primary structure comprises 152 residues: UPF0266 membrane protein YobD (152 aa).

The next 3 membrane-spanning stretches (helical) occupy residues 6–26 (LVLI…QFIM), 45–65 (IDSV…VTNH), and 67–87 (AQIT…IFWI).

The protein belongs to the UPF0266 family.

Its subcellular location is the cell inner membrane. The polypeptide is UPF0266 membrane protein YobD (Escherichia fergusonii (strain ATCC 35469 / DSM 13698 / CCUG 18766 / IAM 14443 / JCM 21226 / LMG 7866 / NBRC 102419 / NCTC 12128 / CDC 0568-73)).